The primary structure comprises 329 residues: Protein SPATA31F3 (329 aa).

Residues 11 to 31 (VGYSVYTYGSIFIIALIIWQV) form a helical membrane-spanning segment. The stretch at 58–85 (SDRATRAKRTSKEEAEKLQKLLDTMKSQ) forms a coiled coil. Disordered stretches follow at residues 149–184 (ADRS…RSAT), 201–250 (QQLD…AAPT), and 288–329 (KPMT…KRNI). Ser152 and Ser153 each carry phosphoserine. Polar residues-rich tracts occupy residues 154-184 (ELTY…RSAT) and 201-223 (QQLD…SSTD). The span at 232-242 (QKKRKKTKKLA) shows a compositional bias: basic residues. A compositionally biased stretch (basic and acidic residues) spans 293–320 (EPEKTHSPVRDQAEGAEKKKKPECDLKA).

It belongs to the SPATA31 family.

The protein localises to the membrane. The chain is Protein SPATA31F3 from Rattus norvegicus (Rat).